Reading from the N-terminus, the 259-residue chain is MLMVISPAKTLDYETPPVTHRFTQPQYLDHAQELIQQLRQLTPLQISELMKLSDKLAGLNAARYASWHPEFTPENAKQALLAFKGDVYTGLNAEDFGEDDFAFAQDHLCMLSGLYGVLRPLDLMQPYRLEMGTRLANARGKDLYAFWGERISQWLNEALAAQGDDVLLNLASNEYFGAVKRKALQARVIDTEFKDLKNGQYKIISFYAKKARGMMARYVIRERLRDPAGLKDFNAHGYYFSAEQSGPDQLVFLRDAPQD.

This sequence belongs to the UPF0246 family.

The sequence is that of UPF0246 protein PA14_18590 from Pseudomonas aeruginosa (strain UCBPP-PA14).